A 124-amino-acid polypeptide reads, in one-letter code: Ribonuclease pancreatic (124 aa).

Over residues Lys-1–Met-13 the composition is skewed to basic and acidic residues. Residues Lys-1–Tyr-25 are disordered. Residues Lys-7 and Arg-10 each coordinate substrate. His-12 (proton acceptor) is an active-site residue. 4 disulfide bridges follow: Cys-26–Cys-84, Cys-40–Cys-95, Cys-58–Cys-110, and Cys-65–Cys-72. Substrate-binding positions include Lys-41–Thr-45, Lys-66, and Arg-85. The active-site Proton donor is the His-119.

It belongs to the pancreatic ribonuclease family. Monomer. Interacts with and forms tight 1:1 complexes with RNH1. Dimerization of two such complexes may occur. Interaction with RNH1 inhibits this protein. Pancreas.

The protein resides in the secreted. The catalysed reaction is an [RNA] containing cytidine + H2O = an [RNA]-3'-cytidine-3'-phosphate + a 5'-hydroxy-ribonucleotide-3'-[RNA].. It catalyses the reaction an [RNA] containing uridine + H2O = an [RNA]-3'-uridine-3'-phosphate + a 5'-hydroxy-ribonucleotide-3'-[RNA].. In terms of biological role, endonuclease that catalyzes the cleavage of RNA on the 3' side of pyrimidine nucleotides. Acts on single-stranded and double-stranded RNA. The polypeptide is Ribonuclease pancreatic (RNASE1) (Tragelaphus oryx (Eland)).